A 311-amino-acid chain; its full sequence is Pyrimidine-specific ribonucleoside hydrolase RihA (311 aa).

His-240 is an active-site residue.

The protein belongs to the IUNH family. RihA subfamily.

Functionally, hydrolyzes cytidine or uridine to ribose and cytosine or uracil, respectively. The sequence is that of Pyrimidine-specific ribonucleoside hydrolase RihA from Salmonella enteritidis PT4 (strain P125109).